Here is a 119-residue protein sequence, read N- to C-terminus: Holo-[acyl-carrier-protein] synthase (119 aa).

Positions 8 and 53 each coordinate Mg(2+).

This sequence belongs to the P-Pant transferase superfamily. AcpS family. The cofactor is Mg(2+).

The protein localises to the cytoplasm. The catalysed reaction is apo-[ACP] + CoA = holo-[ACP] + adenosine 3',5'-bisphosphate + H(+). Functionally, transfers the 4'-phosphopantetheine moiety from coenzyme A to a Ser of acyl-carrier-protein. This chain is Holo-[acyl-carrier-protein] synthase, found in Petrotoga mobilis (strain DSM 10674 / SJ95).